The following is a 205-amino-acid chain: Ribosomal RNA small subunit methyltransferase G (205 aa).

Residues glycine 66, phenylalanine 71, 119 to 120, and arginine 135 each bind S-adenosyl-L-methionine; that span reads IE.

This sequence belongs to the methyltransferase superfamily. RNA methyltransferase RsmG family.

The protein resides in the cytoplasm. It catalyses the reaction guanosine(527) in 16S rRNA + S-adenosyl-L-methionine = N(7)-methylguanosine(527) in 16S rRNA + S-adenosyl-L-homocysteine. Functionally, specifically methylates the N7 position of guanine in position 527 of 16S rRNA. In Rhizobium rhizogenes (strain K84 / ATCC BAA-868) (Agrobacterium radiobacter), this protein is Ribosomal RNA small subunit methyltransferase G.